Here is a 1267-residue protein sequence, read N- to C-terminus: Probable cation-transporting ATPase catp-6 (1267 aa).

At 1 to 32 (MVEAGGARRHRMTLESGDHTLTLFAYRTGPFR) the chain is on the extracellular side. The chain crosses the membrane as a helical span at residues 33-53 (TILFYALTVLTLGIFRLILHW). Residues 54-189 (KQKWDVKMRM…RNEIVVQLRP (136 aa)) lie on the Cytoplasmic side of the membrane. Residues 190 to 210 (ILYLLVMEVITPFYVFQIFSV) traverse the membrane as a helical segment. The Extracellular segment spans residues 211-217 (TVWYNDE). A helical membrane pass occupies residues 218–238 (YAYYASLIVILSLGSIVMDVY). At 239 to 390 (QIRTQEIRLR…DFRFTKDLFK (152 aa)) the chain is on the cytoplasmic side. The helical transmembrane segment at 391-411 (FILFLACISGCGFIYTIIVMI) threads the bilayer. Topologically, residues 412–424 (MRGNTLRRIIVRS) are extracellular. A helical membrane pass occupies residues 425 to 445 (LDIITITVPPALPAAMSVGII). The Cytoplasmic segment spans residues 446–950 (NAQLRLKKKE…VTSFGIFKYM (505 aa)). Catalysis depends on aspartate 476, which acts as the 4-aspartylphosphate intermediate. Aspartate 891 and aspartate 895 together coordinate Mg(2+). A helical membrane pass occupies residues 951–971 (AGYSLTQFVTVMHLYWISNIL). Over 972–976 (TDGQF) the chain is Extracellular. The chain crosses the membrane as a helical span at residues 977 to 997 (MYIDMFLITMFALLFGNTPAF). The Cytoplasmic segment spans residues 998–1013 (YRLAHTPPPTRLLSIA). The helical transmembrane segment at 1014 to 1034 (SMTSVVGQLIIIGVVQFIVFF) threads the bilayer. The Extracellular segment spans residues 1035–1058 (STSQQPWFTPYQPPVDDEVEDKRS). The helical transmembrane segment at 1059–1079 (MQGTALFCVSMFQYIILALVY) threads the bilayer. Residues 1080–1097 (SKGPPFRGNLWSNKPMCA) are Cytoplasmic-facing. Residues 1098-1118 (LTIFATLLCLFIVIWPTELVL) form a helical membrane-spanning segment. The Extracellular portion of the chain corresponds to 1119–1132 (KTLGNVELPSLTFR). The chain crosses the membrane as a helical span at residues 1133-1153 (IFIVIVGAVNAAVSYGFETLF). The Cytoplasmic segment spans residues 1154–1267 (VDFFLLGYWE…EEPEKLERTY (114 aa)). Positions 1232 to 1256 (ERLISRIGGEPTWLTNPIPPHSLSE) are disordered.

It belongs to the cation transport ATPase (P-type) (TC 3.A.3) family. Type V subfamily.

It localises to the membrane. The catalysed reaction is ATP + H2O = ADP + phosphate + H(+). The chain is Probable cation-transporting ATPase catp-6 from Caenorhabditis elegans.